We begin with the raw amino-acid sequence, 400 residues long: Melanization protease 1 (400 aa).

Residues 1-22 (MEPHFFFTVLWMLLMGTSSTYA) form the signal peptide. Positions 23–137 (QEIFGYCRTP…PNCGENFGDR (115 aa)) are cleaved as a propeptide — activation peptide. Residues 28–91 (YCRTPDENSG…FCFTNVQICC (64 aa)) form the Clip domain. 3 disulfide bridges follow: Cys29–Cys90, Cys39–Cys70, and Cys45–Cys91. The segment at 98-120 (NQQPQWGNHPQPTQTTKPTKRSG) is disordered. 3 disulfides stabilise this stretch: Cys130/Cys268, Cys168/Cys184, and Cys210/Cys220. Positions 138 to 399 (VVGGNETTKR…YLNWIENNVR (262 aa)) constitute a Peptidase S1 domain. Asn142 carries an N-linked (GlcNAc...) asparagine glycan. His183 serves as the catalytic Charge relay system. 4 residues coordinate Ca(2+): Glu201, Asp203, Thr206, and Asp209. Asp248 (charge relay system) is an active-site residue. An N-linked (GlcNAc...) asparagine glycan is attached at Asn296. Cystine bridges form between Cys315–Cys332 and Cys342–Cys375. Ser346 serves as the catalytic Charge relay system.

This sequence belongs to the peptidase S1 family. CLIP subfamily.

Functionally, serine protease which plays an essential role in the melanization immune response by acting downstream of sp7 to activate prophenoloxidase (PPO1). May function in diverse Hayan-dependent PPO1-activating cascades that are negatively controlled by different serpin proteins; Spn27A in the hemolymph and Spn77BA in the trachea. Regulation of melanization and PPO1 activation appears to be largely independent of the Toll signaling pathway. This Drosophila melanogaster (Fruit fly) protein is Melanization protease 1.